The primary structure comprises 206 residues: dTTP/UTP pyrophosphatase (206 aa).

The active-site Proton acceptor is the Asp-79.

The protein belongs to the Maf family. YhdE subfamily. A divalent metal cation serves as cofactor.

The protein localises to the cytoplasm. The catalysed reaction is dTTP + H2O = dTMP + diphosphate + H(+). It catalyses the reaction UTP + H2O = UMP + diphosphate + H(+). Nucleoside triphosphate pyrophosphatase that hydrolyzes dTTP and UTP. May have a dual role in cell division arrest and in preventing the incorporation of modified nucleotides into cellular nucleic acids. The chain is dTTP/UTP pyrophosphatase from Rhizobium meliloti (strain 1021) (Ensifer meliloti).